The primary structure comprises 173 residues: Putative metal-dependent hydrolase BA_2700/GBAA_2700/BAS2515 (173 aa).

Residues His65, His156, and His160 each coordinate Zn(2+).

It belongs to the metal hydrolase YfiT family. In terms of assembly, homodimer. Zn(2+) is required as a cofactor.

The protein localises to the cytoplasm. Its function is as follows. Possible metal-dependent hydrolase. This chain is Putative metal-dependent hydrolase BA_2700/GBAA_2700/BAS2515, found in Bacillus anthracis.